Consider the following 318-residue polypeptide: GTP 3',8-cyclase (318 aa).

Positions 5–217 (KFERKIDYIR…DKIAKKYKFK (213 aa)) constitute a Radical SAM core domain. Arg-14 lines the GTP pocket. [4Fe-4S] cluster contacts are provided by Cys-21 and Cys-25. Tyr-27 is a binding site for S-adenosyl-L-methionine. Cys-28 serves as a coordination point for [4Fe-4S] cluster. GTP is bound at residue Arg-64. Residue Gly-68 participates in S-adenosyl-L-methionine binding. Thr-95 lines the GTP pocket. An S-adenosyl-L-methionine-binding site is contributed by Ser-119. Lys-155 serves as a coordination point for GTP. Residue Met-189 participates in S-adenosyl-L-methionine binding. [4Fe-4S] cluster-binding residues include Cys-248 and Cys-251. 253–255 (RIR) contributes to the GTP binding site. A [4Fe-4S] cluster-binding site is contributed by Cys-265.

It belongs to the radical SAM superfamily. MoaA family. As to quaternary structure, monomer and homodimer. [4Fe-4S] cluster is required as a cofactor.

The catalysed reaction is GTP + AH2 + S-adenosyl-L-methionine = (8S)-3',8-cyclo-7,8-dihydroguanosine 5'-triphosphate + 5'-deoxyadenosine + L-methionine + A + H(+). Its pathway is cofactor biosynthesis; molybdopterin biosynthesis. In terms of biological role, catalyzes the cyclization of GTP to (8S)-3',8-cyclo-7,8-dihydroguanosine 5'-triphosphate. The polypeptide is GTP 3',8-cyclase (Nautilia profundicola (strain ATCC BAA-1463 / DSM 18972 / AmH)).